Consider the following 155-residue polypeptide: MSKVLEQVEAIVAPITDELQLELVDIAFEKEGPNWFLRIFIDKDGGVDIDECAAVSEKVSEKMDESDPITQNYFLEVSSPGAERPLKKEQDFENAVGKYVHVTSYEPIDGRKMWEGTLVSYDGTTLVITITDKTRKITCEIPKDKVAKARLAIQF.

This sequence belongs to the RimP family.

It is found in the cytoplasm. In terms of biological role, required for maturation of 30S ribosomal subunits. This is Ribosome maturation factor RimP from Listeria innocua serovar 6a (strain ATCC BAA-680 / CLIP 11262).